The sequence spans 88 residues: Acylphosphatase (88 aa).

The Acylphosphatase-like domain maps to 3–88 (AARFVVSGVV…VPPTEDFVTG (86 aa)). Residues Arg-18 and Asn-36 contribute to the active site.

This sequence belongs to the acylphosphatase family.

The enzyme catalyses an acyl phosphate + H2O = a carboxylate + phosphate + H(+). This is Acylphosphatase (acyP) from Xanthomonas oryzae pv. oryzae (strain MAFF 311018).